Here is a 558-residue protein sequence, read N- to C-terminus: REST corepressor spr-1 (558 aa).

A disordered region spans residues 1–106 (MDLYDDDGES…KVKGPLSNTN (106 aa)). Positions 36–56 (TIEENVPEVEENTLLEEDSLV) are enriched in acidic residues. Residues 69–80 (KPSKSKRKRKRS) are compositionally biased toward basic residues. An ELM2 domain is found at 107–192 (KEINVGTEFQ…SAIAEVARRN (86 aa)). The region spanning 193 to 244 (ELKDVWTDQEITLFENCYQIFGKNFSQIRSALCHRSLQSIVQFYYESKKRVK) is the SANT 1 domain. The segment at 271-325 (AIFESMCDNCGEKAENMQINNAMNRPECRACLIYFNQTGVPRPTSLRLVLAERIR) adopts a GATA-type zinc-finger fold. Over residues 378–402 (CTENGNVGETSSPSAQKTEIQSESD) the composition is skewed to polar residues. The disordered stretch occupies residues 378–406 (CTENGNVGETSSPSAQKTEIQSESDGSGP). In terms of domain architecture, SANT 2 spans 481-532 (HYSQDWTQLERSQVIRCFNMYGAHFEHIADVIGTKTPDQVYQFYLENQKAID).

It belongs to the CoREST family. In terms of assembly, probably part of a large repressor complex. Interacts with histone demethylase spr-5/lsd-1.

It is found in the nucleus. Its function is as follows. Probable corepressor protein, which probably participates in the transcriptional repression of the presenilin protein hop-1. Probably acts via the formation of a multiprotein complex that deacetylates and demethylates specific sites on histones. Acts redundantly with the transcriptional repressor lin-35 to play a role in vulval morphogenesis and promote germline proliferation. The polypeptide is REST corepressor spr-1 (Caenorhabditis elegans).